The chain runs to 352 residues: tRNA N6-adenosine threonylcarbamoyltransferase (352 aa).

2 residues coordinate Fe cation: His117 and His121. Substrate-binding positions include Leu140–Gly144, Asp173, Gly186, and Asn287. Asp315 contributes to the Fe cation binding site.

The protein belongs to the KAE1 / TsaD family. It depends on Fe(2+) as a cofactor.

The protein resides in the cytoplasm. It catalyses the reaction L-threonylcarbamoyladenylate + adenosine(37) in tRNA = N(6)-L-threonylcarbamoyladenosine(37) in tRNA + AMP + H(+). Functionally, required for the formation of a threonylcarbamoyl group on adenosine at position 37 (t(6)A37) in tRNAs that read codons beginning with adenine. Is involved in the transfer of the threonylcarbamoyl moiety of threonylcarbamoyl-AMP (TC-AMP) to the N6 group of A37, together with TsaE and TsaB. TsaD likely plays a direct catalytic role in this reaction. The chain is tRNA N6-adenosine threonylcarbamoyltransferase from Psychrobacter cryohalolentis (strain ATCC BAA-1226 / DSM 17306 / VKM B-2378 / K5).